The primary structure comprises 964 residues: Glycine dehydrogenase (decarboxylating) (964 aa).

Position 711 is an N6-(pyridoxal phosphate)lysine (Lys711).

This sequence belongs to the GcvP family. In terms of assembly, the glycine cleavage system is composed of four proteins: P, T, L and H. The cofactor is pyridoxal 5'-phosphate.

It carries out the reaction N(6)-[(R)-lipoyl]-L-lysyl-[glycine-cleavage complex H protein] + glycine + H(+) = N(6)-[(R)-S(8)-aminomethyldihydrolipoyl]-L-lysyl-[glycine-cleavage complex H protein] + CO2. In terms of biological role, the glycine cleavage system catalyzes the degradation of glycine. The P protein binds the alpha-amino group of glycine through its pyridoxal phosphate cofactor; CO(2) is released and the remaining methylamine moiety is then transferred to the lipoamide cofactor of the H protein. In Prochlorococcus marinus (strain SARG / CCMP1375 / SS120), this protein is Glycine dehydrogenase (decarboxylating).